Here is a 153-residue protein sequence, read N- to C-terminus: Interleukin-2 (153 aa).

The signal sequence occupies residues 1 to 20 (MYKVQLLSCIALTLALLTSS). Thr-23 carries O-linked (GalNAc...) threonine glycosylation. A disulfide bridge connects residues Cys-78 and Cys-125. Asn-111 carries N-linked (GlcNAc...) asparagine glycosylation.

The protein belongs to the IL-2 family.

The protein localises to the secreted. Its function is as follows. Cytokine produced by activated CD4-positive helper T-cells and to a lesser extend activated CD8-positive T-cells and natural killer (NK) cells that plays pivotal roles in the immune response and tolerance. Binds to a receptor complex composed of either the high-affinity trimeric IL-2R (IL2RA/CD25, IL2RB/CD122 and IL2RG/CD132) or the low-affinity dimeric IL-2R (IL2RB and IL2RG). Interaction with the receptor leads to oligomerization and conformation changes in the IL-2R subunits resulting in downstream signaling starting with phosphorylation of JAK1 and JAK3. In turn, JAK1 and JAK3 phosphorylate the receptor to form a docking site leading to the phosphorylation of several substrates including STAT5. This process leads to activation of several pathways including STAT, phosphoinositide-3-kinase/PI3K and mitogen-activated protein kinase/MAPK pathways. Functions as a T-cell growth factor and can increase NK-cell cytolytic activity as well. Promotes strong proliferation of activated B-cells and subsequently immunoglobulin production. Plays a pivotal role in regulating the adaptive immune system by controlling the survival and proliferation of regulatory T-cells, which are required for the maintenance of immune tolerance. Moreover, participates in the differentiation and homeostasis of effector T-cell subsets, including Th1, Th2, Th17 as well as memory CD8-positive T-cells. The protein is Interleukin-2 (IL2) of Oryctolagus cuniculus (Rabbit).